Consider the following 212-residue polypeptide: Holliday junction branch migration complex subunit RuvA (212 aa).

Residues 1 to 66 form a domain I region; sequence MISGLKGTLK…ERGQKLFGFL (66 aa). A domain II region spans residues 67–145; sequence TEQDKEFFKV…KLELFLSGTS (79 aa). The tract at residues 146–162 is flexible linker; it reads KEPSISLSSFSETPEEA. Residues 163-212 are domain III; the sequence is ALSRKREIAILGLVQLGFEEKTASKEVDKILKSSSPTDPGEIIREILKSL.

It belongs to the RuvA family. As to quaternary structure, homotetramer. Forms an RuvA(8)-RuvB(12)-Holliday junction (HJ) complex. HJ DNA is sandwiched between 2 RuvA tetramers; dsDNA enters through RuvA and exits via RuvB. An RuvB hexamer assembles on each DNA strand where it exits the tetramer. Each RuvB hexamer is contacted by two RuvA subunits (via domain III) on 2 adjacent RuvB subunits; this complex drives branch migration. In the full resolvosome a probable DNA-RuvA(4)-RuvB(12)-RuvC(2) complex forms which resolves the HJ.

It localises to the cytoplasm. Its function is as follows. The RuvA-RuvB-RuvC complex processes Holliday junction (HJ) DNA during genetic recombination and DNA repair, while the RuvA-RuvB complex plays an important role in the rescue of blocked DNA replication forks via replication fork reversal (RFR). RuvA specifically binds to HJ cruciform DNA, conferring on it an open structure. The RuvB hexamer acts as an ATP-dependent pump, pulling dsDNA into and through the RuvAB complex. HJ branch migration allows RuvC to scan DNA until it finds its consensus sequence, where it cleaves and resolves the cruciform DNA. The sequence is that of Holliday junction branch migration complex subunit RuvA from Leptospira borgpetersenii serovar Hardjo-bovis (strain JB197).